Here is a 147-residue protein sequence, read N- to C-terminus: MSFLSAEEKNLVSGLWGKVNVDEVGGEALGRLLVVYPWTQRFFQSFGDLSSADAIMSNAKVKAHGKKVLNSFSDGLKNIDDLKGAFAKLSELHCDKLHVDPENFRLLGNVLVCVLAHHFGHEFNPQVQAAFQKVVAGVASALAHRYH.

S2 carries the N-acetylserine modification. The Globin domain occupies 3-147; the sequence is FLSAEEKNLV…VASALAHRYH (145 aa). The residue at position 45 (S45) is a Phosphoserine. K60 is subject to N6-acetyllysine. H64 is a heme b binding site. The residue at position 83 (K83) is an N6-acetyllysine. H93 lines the heme b pocket. C94 bears the S-nitrosocysteine mark.

This sequence belongs to the globin family. In terms of assembly, heterotetramer of two alpha chains and two beta chains. As to expression, red blood cells.

Functionally, involved in oxygen transport from the lung to the various peripheral tissues. This is Hemoglobin subunit beta (HBB) from Panthera pardus orientalis (Amur leopard).